Here is a 142-residue protein sequence, read N- to C-terminus: Hemoglobin subunit alpha (142 aa).

A Globin domain is found at V2–R142. S4 carries the phosphoserine modification. An N6-succinyllysine modification is found at K8. T9 carries the post-translational modification Phosphothreonine. Position 12 is an N6-succinyllysine (K12). N6-acetyllysine; alternate is present on K17. K17 carries the post-translational modification N6-succinyllysine; alternate. Phosphotyrosine is present on Y25. The residue at position 36 (S36) is a Phosphoserine. K41 carries the N6-succinyllysine modification. A Phosphoserine modification is found at S50. H59 provides a ligand contact to O2. Heme b is bound at residue H88. S103 bears the Phosphoserine mark. Residue T109 is modified to Phosphothreonine. S125 carries the phosphoserine modification. Phosphothreonine is present on residues T135 and T138. S139 carries the post-translational modification Phosphoserine.

The protein belongs to the globin family. Heterotetramer of two alpha chains and two beta chains. Red blood cells.

Functionally, involved in oxygen transport from the lung to the various peripheral tissues. In terms of biological role, hemopressin acts as an antagonist peptide of the cannabinoid receptor CNR1. Hemopressin-binding efficiently blocks cannabinoid receptor CNR1 and subsequent signaling. The sequence is that of Hemoglobin subunit alpha (HBA) from Ailurus fulgens (Himalayan red panda).